Consider the following 210-residue polypeptide: Calcium-activated potassium channel subunit beta-4 (210 aa).

Residues 1–19 (MAKLRVAYEYTEAEDKSIR) are Cytoplasmic-facing. The helical transmembrane segment at 20–40 (LGLFLIISGVVSLFIFGFCWL) threads the bilayer. Residues 41-167 (SPALQDLQAT…DVLLHRTHDE (127 aa)) lie on the Extracellular side of the membrane. 2 N-linked (GlcNAc...) asparagine glycosylation sites follow: Asn-53 and Asn-90. Residues 168–188 (IVLLHCFLWPLVTFVVGVLIV) traverse the membrane as a helical segment. Topologically, residues 189 to 210 (VLTICAKSLAVKAEAMKKRKFS) are cytoplasmic.

This sequence belongs to the KCNMB (TC 8.A.14.1) family. KCNMB4 subfamily. Interacts with KCNMA1 tetramer. There are probably 4 molecules of KCMNB4 per KCNMA1 tetramer. Interacts with FMR1 (via N-terminus). Phosphorylated. Phosphorylation modulates its effect on KCNMA1 activation kinetics. Post-translationally, N-glycosylated. A highly glycosylated form is promoted by KCNMA1. Glycosylation, which is not required for the interaction with KCNMA1 and subcellular location, increases protection against charybdotoxin. In terms of tissue distribution, predominantly expressed in brain. In brain, it is expressed in the cerebellum, cerebral cortex, medulla, spinal cord, occipital pole, frontal lobe, temporal lobe, putamen, amygdala, caudate nucleus, corpus callosum, hippocampus, substantia nigra and thalamus. Weakly or not expressed in other tissues.

Its subcellular location is the membrane. Regulatory subunit of the calcium activated potassium KCNMA1 (maxiK) channel. Modulates the calcium sensitivity and gating kinetics of KCNMA1, thereby contributing to KCNMA1 channel diversity. Decreases the gating kinetics and calcium sensitivity of the KCNMA1 channel, but with fast deactivation kinetics. May decrease KCNMA1 channel openings at low calcium concentrations but increases channel openings at high calcium concentrations. Makes KCNMA1 channel resistant to 100 nM charybdotoxin (CTX) toxin concentrations. The polypeptide is Calcium-activated potassium channel subunit beta-4 (KCNMB4) (Homo sapiens (Human)).